A 388-amino-acid chain; its full sequence is Protein RecA (388 aa).

79-86 (GPESSGKT) is an ATP binding site. The tract at residues 347–388 (IDGEEVSEQDTENKKDEPKKEEAVNEEVPLDLGDELEIEIEE) is disordered. The segment covering 357–369 (TENKKDEPKKEEA) has biased composition (basic and acidic residues). Acidic residues predominate over residues 370–388 (VNEEVPLDLGDELEIEIEE).

Belongs to the RecA family.

The protein resides in the cytoplasm. Its function is as follows. Can catalyze the hydrolysis of ATP in the presence of single-stranded DNA, the ATP-dependent uptake of single-stranded DNA by duplex DNA, and the ATP-dependent hybridization of homologous single-stranded DNAs. It interacts with LexA causing its activation and leading to its autocatalytic cleavage. The chain is Protein RecA from Streptococcus pneumoniae (strain Hungary19A-6).